The chain runs to 51 residues: Insulin (51 aa).

Intrachain disulfides connect Cys-8–Cys-37, Cys-20–Cys-50, and Cys-36–Cys-41.

This sequence belongs to the insulin family. As to quaternary structure, heterodimer of a B chain and an A chain linked by two disulfide bonds.

It localises to the secreted. Its function is as follows. Insulin decreases blood glucose concentration. It increases cell permeability to monosaccharides, amino acids and fatty acids. It accelerates glycolysis, the pentose phosphate cycle, and glycogen synthesis in liver. This chain is Insulin, found in Pagrus major (Red sea bream).